The chain runs to 485 residues: Inosine-5'-monophosphate dehydrogenase (485 aa).

CBS domains are found at residues 95–154 (VITN…IDDV) and 155–215 (MTKE…AKDS). Residues Asp-249 and 299–301 (GIG) contribute to the NAD(+) site. 2 residues coordinate K(+): Gly-301 and Gly-303. Ser-304 lines the IMP pocket. Position 306 (Cys-306) interacts with K(+). The Thioimidate intermediate role is filled by Cys-306. IMP is bound by residues 339–341 (DGG), 362–363 (GS), and 386–390 (YRGMG). Arg-402 acts as the Proton acceptor in catalysis. Glu-414 is an IMP binding site. Residues Glu-468, Ser-469, and His-470 each contribute to the K(+) site.

The protein belongs to the IMPDH/GMPR family. In terms of assembly, homotetramer. It depends on K(+) as a cofactor.

It carries out the reaction IMP + NAD(+) + H2O = XMP + NADH + H(+). It functions in the pathway purine metabolism; XMP biosynthesis via de novo pathway; XMP from IMP: step 1/1. With respect to regulation, mycophenolic acid (MPA) is a non-competitive inhibitor that prevents formation of the closed enzyme conformation by binding to the same site as the amobile flap. In contrast, mizoribine monophosphate (MZP) is a competitive inhibitor that induces the closed conformation. MPA is a potent inhibitor of mammalian IMPDHs but a poor inhibitor of the bacterial enzymes. MZP is a more potent inhibitor of bacterial IMPDH. Functionally, catalyzes the conversion of inosine 5'-phosphate (IMP) to xanthosine 5'-phosphate (XMP), the first committed and rate-limiting step in the de novo synthesis of guanine nucleotides, and therefore plays an important role in the regulation of cell growth. The polypeptide is Inosine-5'-monophosphate dehydrogenase (Halalkalibacterium halodurans (strain ATCC BAA-125 / DSM 18197 / FERM 7344 / JCM 9153 / C-125) (Bacillus halodurans)).